The chain runs to 209 residues: 3-demethoxyubiquinol 3-hydroxylase (209 aa).

Low complexity predominate over residues 23-36; the sequence is PHATRAAPAPAQAP. The segment at 23-42 is disordered; it reads PHATRAAPAPAQAPGEMTDS. The Fe cation site is built by Glu58, Glu88, His91, Glu140, Glu172, and His175.

Belongs to the COQ7 family. It depends on Fe cation as a cofactor.

It is found in the cell membrane. It carries out the reaction a 5-methoxy-2-methyl-3-(all-trans-polyprenyl)benzene-1,4-diol + AH2 + O2 = a 3-demethylubiquinol + A + H2O. It functions in the pathway cofactor biosynthesis; ubiquinone biosynthesis. Catalyzes the hydroxylation of 2-nonaprenyl-3-methyl-6-methoxy-1,4-benzoquinol during ubiquinone biosynthesis. The protein is 3-demethoxyubiquinol 3-hydroxylase of Variovorax paradoxus (strain S110).